The chain runs to 506 residues: Histidine--tRNA ligase (506 aa).

This sequence belongs to the class-II aminoacyl-tRNA synthetase family. As to quaternary structure, homodimer.

The protein resides in the cytoplasm. The enzyme catalyses tRNA(His) + L-histidine + ATP = L-histidyl-tRNA(His) + AMP + diphosphate + H(+). The chain is Histidine--tRNA ligase (hisS) from Bradyrhizobium diazoefficiens (strain JCM 10833 / BCRC 13528 / IAM 13628 / NBRC 14792 / USDA 110).